Consider the following 461-residue polypeptide: MWQLTSLLLFVATWGISGTPAPLDSVFSSSERAHQVLRIRKRANSFLEELRHSSLERECIEEICDFEEAKEIFQNVDDTLAFWSKHVDGDQCLVLPLEHPCASLCCGHGTCIDGIGSFSCDCRSGWEGRFCQREVSFLNCSLDNGGCTHYCLEEVGWRRCSCAPGYKLGDDLLQCHPAVKFPCGRPWKRMEKKRSHLKRDTEDQEDQVDPRLIDGKMTRRGDSPWQVVLLDSKKKLACGAVLIHPSWVLTAAHCMDESKKLLVRLGEYDLRRWEKWELDLDIKEVFVHPNYSKSTTDNDIALLHLAQPATLSQTIVPICLPDSGLAERELNQAGQETLVTGWGYHSSREKEAKRNRTFVLNFIKIPVVPHNECSEVMSNMVSENMLCAGILGDRQDACEGDSGGPMVASFHGTWFLVGLVSWGEGCGLLHNYGVYTKVSRYLDWIHGHIRDKEAPQKSWAP.

A signal peptide spans 1-18 (MWQLTSLLLFVATWGISG). The O-linked (GalNAc...) threonine glycan is linked to Thr19. Residues 19–42 (TPAPLDSVFSSSERAHQVLRIRKR) constitute a propeptide that is removed on maturation. A Gla domain is found at 43–88 (ANSFLEELRHSSLERECIEEICDFEEAKEIFQNVDDTLAFWSKHVD). A 4-carboxyglutamate mark is found at Glu48, Glu49, Glu56, Glu58, Glu61, Glu62, Glu67, Glu68, and Glu71. A disulfide bridge connects residues Cys59 and Cys64. 4 disulfide bridges follow: Cys92–Cys111, Cys101–Cys106, Cys105–Cys120, and Cys122–Cys131. 2 consecutive EGF-like domains span residues 97-132 (LEHP…RFCQ) and 136-176 (SFLN…LQCH). A (3R)-3-hydroxyaspartate modification is found at Asp113. Residue Asn139 is glycosylated (N-linked (GlcNAc...) asparagine). 5 disulfide bridges follow: Cys140–Cys151, Cys147–Cys160, Cys162–Cys175, Cys183–Cys319, and Cys238–Cys254. The 239-residue stretch at 212 to 450 (LIDGKMTRRG…YLDWIHGHIR (239 aa)) folds into the Peptidase S1 domain. His253 acts as the Charge relay system in catalysis. Asn290 carries an N-linked (GlcNAc...) asparagine glycan. Asp299 (charge relay system) is an active-site residue. Residue Ser347 is modified to Phosphoserine; by FAM20C. N-linked (GlcNAc...) asparagine glycosylation occurs at Asn355. Residue Asn371 is glycosylated (N-linked (GlcNAc...) asparagine; atypical; partial). 2 cysteine pairs are disulfide-bonded: Cys373–Cys387 and Cys398–Cys426. The active-site Charge relay system is Ser402.

It belongs to the peptidase S1 family. In terms of assembly, synthesized as a single chain precursor, which is cleaved into a light chain and a heavy chain held together by a disulfide bond. The enzyme is then activated by thrombin, which cleaves a tetradecapeptide from the amino end of the heavy chain; this reaction, which occurs at the surface of endothelial cells, is strongly promoted by thrombomodulin. Interacts (activated) with iripin-8, a serine protease inhibitor from Ixodes ricinus saliva. The vitamin K-dependent, enzymatic carboxylation of some Glu residues allows the modified protein to bind calcium. Post-translationally, N- and O-glycosylated. Partial (70%) N-glycosylation of Asn-371 with an atypical N-X-C site produces a higher molecular weight form referred to as alpha. The lower molecular weight form, not N-glycosylated at Asn-371, is beta. O-glycosylated with core 1 or possibly core 8 glycans. In terms of processing, the iron and 2-oxoglutarate dependent 3-hydroxylation of aspartate and asparagine is (R) stereospecific within EGF domains. May be phosphorylated on a Ser or Thr in a region (AA 25-30) of the propeptide. In terms of tissue distribution, plasma; synthesized in the liver.

It localises to the secreted. Its subcellular location is the golgi apparatus. The protein resides in the endoplasmic reticulum. The catalysed reaction is Degradation of blood coagulation factors Va and VIIIa.. Functionally, protein C is a vitamin K-dependent serine protease that regulates blood coagulation by inactivating factors Va and VIIIa in the presence of calcium ions and phospholipids. Exerts a protective effect on the endothelial cell barrier function. In Homo sapiens (Human), this protein is Vitamin K-dependent protein C (PROC).